The following is a 313-amino-acid chain: Tyrosine recombinase slr0733 (313 aa).

One can recognise a Core-binding (CB) domain in the interval 7–101 (NNLSGLNQNI…AIKSLVNYAR (95 aa)). Residues 122–307 (RDTTGVSPTS…RHQHQAQITD (186 aa)) form the Tyr recombinase domain. Residues R162, K188, H258, R261, and H285 contribute to the active site. Y294 functions as the O-(3'-phospho-DNA)-tyrosine intermediate in the catalytic mechanism.

The protein belongs to the 'phage' integrase family.

Its subcellular location is the cytoplasm. Functionally, site-specific tyrosine recombinase, which acts by catalyzing the cutting and rejoining of the recombining DNA molecules. The protein is Tyrosine recombinase slr0733 of Synechocystis sp. (strain ATCC 27184 / PCC 6803 / Kazusa).